Here is a 267-residue protein sequence, read N- to C-terminus: Indole-3-glycerol phosphate synthase (267 aa).

The protein belongs to the TrpC family.

The enzyme catalyses 1-(2-carboxyphenylamino)-1-deoxy-D-ribulose 5-phosphate + H(+) = (1S,2R)-1-C-(indol-3-yl)glycerol 3-phosphate + CO2 + H2O. It participates in amino-acid biosynthesis; L-tryptophan biosynthesis; L-tryptophan from chorismate: step 4/5. The sequence is that of Indole-3-glycerol phosphate synthase from Dichelobacter nodosus (strain VCS1703A).